We begin with the raw amino-acid sequence, 163 residues long: NADH-quinone oxidoreductase subunit I (163 aa).

4Fe-4S ferredoxin-type domains are found at residues 53–83 (LRRY…IEAG) and 94–123 (VRYD…EGPN). C63, C66, C69, C73, C103, C106, C109, and C113 together coordinate [4Fe-4S] cluster.

It belongs to the complex I 23 kDa subunit family. As to quaternary structure, NDH-1 is composed of 14 different subunits. Subunits NuoA, H, J, K, L, M, N constitute the membrane sector of the complex. [4Fe-4S] cluster serves as cofactor.

It is found in the cell inner membrane. The enzyme catalyses a quinone + NADH + 5 H(+)(in) = a quinol + NAD(+) + 4 H(+)(out). Its function is as follows. NDH-1 shuttles electrons from NADH, via FMN and iron-sulfur (Fe-S) centers, to quinones in the respiratory chain. The immediate electron acceptor for the enzyme in this species is believed to be ubiquinone. Couples the redox reaction to proton translocation (for every two electrons transferred, four hydrogen ions are translocated across the cytoplasmic membrane), and thus conserves the redox energy in a proton gradient. This chain is NADH-quinone oxidoreductase subunit I, found in Brucella anthropi (strain ATCC 49188 / DSM 6882 / CCUG 24695 / JCM 21032 / LMG 3331 / NBRC 15819 / NCTC 12168 / Alc 37) (Ochrobactrum anthropi).